A 151-amino-acid polypeptide reads, in one-letter code: NADPH-dependent 7-cyano-7-deazaguanine reductase (151 aa).

The active-site Thioimide intermediate is the Cys-51. The Proton donor role is filled by Asp-58. Residues 73–75 (VES) and 92–93 (HE) each bind substrate.

Belongs to the GTP cyclohydrolase I family. QueF type 1 subfamily.

It is found in the cytoplasm. The enzyme catalyses 7-aminomethyl-7-carbaguanine + 2 NADP(+) = 7-cyano-7-deazaguanine + 2 NADPH + 3 H(+). It functions in the pathway tRNA modification; tRNA-queuosine biosynthesis. Catalyzes the NADPH-dependent reduction of 7-cyano-7-deazaguanine (preQ0) to 7-aminomethyl-7-deazaguanine (preQ1). This Bacteroides thetaiotaomicron (strain ATCC 29148 / DSM 2079 / JCM 5827 / CCUG 10774 / NCTC 10582 / VPI-5482 / E50) protein is NADPH-dependent 7-cyano-7-deazaguanine reductase.